An 833-amino-acid chain; its full sequence is Heat shock transcription factor (833 aa).

N-acetylmethionine is present on M1. Residues 1–16 (MNNAANTGTTNESNVS) show a composition bias toward polar residues. Disordered stretches follow at residues 1-31 (MNNA…NDDD) and 62-92 (NPSL…STHL). Over residues 69 to 80 (SAASPVPSSSFF) the composition is skewed to low complexity. Phosphothreonine is present on T97. Over residues 150–161 (PSSGTTNAQPRQ) the composition is skewed to polar residues. Disordered regions lie at residues 150–170 (PSSG…QSHK) and 277–309 (GSSN…NNSN). Residues 170-259 (KSRPAFVNKL…SDDKWQFENE (90 aa)) mediate DNA binding. The flexible linker stretch occupies residues 260 to 280 (NFIRGREDLLEKIIRQKGSSN). Over residues 277–296 (GSSNNHNSPSGNGNPANGSN) the composition is skewed to low complexity. The segment at 350-403 (ELEQIKYNQIAISKDLLRINKDNELLWQENMMARERHRTQQQALEKMFRFLTSI) is involved in trimerization. Residues 447-457 (SNDSFINDDRN) show a composition bias toward basic and acidic residues. Residues 447–493 (SNDSFINDDRNSFTNATTNARNNMSPNNDDNSIDTASTNTTNRKKNI) are disordered. 5 positions are modified to phosphoserine: S450, S458, S471, S478, and S528. The segment covering 458–487 (SFTNATTNARNNMSPNNDDNSIDTASTNTT) has biased composition (polar residues). The segment covering 542–554 (RANSSTSSENPSL) has biased composition (polar residues). Disordered regions lie at residues 542 to 626 (RANS…HNES), 657 to 765 (GYPN…RVSP), and 778 to 799 (SDNL…APEN). Residues 571 to 580 (PFDDEEEEET) show a composition bias toward acidic residues. Residues 588–600 (RDPNNQTSENTFD) are compositionally biased toward polar residues. Residues 610 to 626 (DDLKKDSHTNDNKHNES) are compositionally biased toward basic and acidic residues. The segment covering 660–675 (NKSFNNKTSSTNTNSN) has biased composition (low complexity). Positions 676 to 687 (MESAVNVNSPGF) are enriched in polar residues. A compositionally biased stretch (low complexity) spans 697–713 (SNSPNSVHSVPSNGSGS). 3 stretches are compositionally biased toward polar residues: residues 727 to 739 (ASTS…NGSG), 752 to 763 (NDNNTSEGSTRV), and 778 to 794 (SDNL…TQAD).

Belongs to the HSF family. In terms of assembly, homotrimer. Homotrimerization increases the affinity of HSF1 to DNA. In terms of processing, exhibits temperature-dependent phosphorylation that activates the transcriptional capacity.

The protein resides in the nucleus. Functionally, DNA-binding transcription factor that specifically binds heat shock promoter elements (HSE) and activates transcription. This is Heat shock transcription factor from Saccharomyces cerevisiae (strain ATCC 204508 / S288c) (Baker's yeast).